The sequence spans 37 residues: Cytochrome b6-f complex subunit 5 (37 aa).

A helical transmembrane segment spans residues 5 to 25; that stretch reads FLFGIVLGLIPITLAGLFVTA.

Belongs to the PetG family. The 4 large subunits of the cytochrome b6-f complex are cytochrome b6, subunit IV (17 kDa polypeptide, PetD), cytochrome f and the Rieske protein, while the 4 small subunits are PetG, PetL, PetM and PetN. The complex functions as a dimer.

The protein localises to the plastid. It is found in the chloroplast thylakoid membrane. Functionally, component of the cytochrome b6-f complex, which mediates electron transfer between photosystem II (PSII) and photosystem I (PSI), cyclic electron flow around PSI, and state transitions. PetG is required for either the stability or assembly of the cytochrome b6-f complex. This is Cytochrome b6-f complex subunit 5 from Capsella bursa-pastoris (Shepherd's purse).